Consider the following 255-residue polypeptide: Small ribosomal subunit protein uS2 (255 aa).

Residues 230–255 (QSSSGRDLGASSEVPVEPALEEAAEG) form a disordered region.

This sequence belongs to the universal ribosomal protein uS2 family.

This Rhizobium leguminosarum bv. trifolii (strain WSM2304) protein is Small ribosomal subunit protein uS2.